Consider the following 25-residue polypeptide: Small ribosomal subunit protein eS32 (25 aa).

The segment at 1–25 (MRAKWRKKRMRRLKRKRRKMRARSK) is disordered.

Belongs to the eukaryotic ribosomal protein eS32 family. In terms of assembly, component of the small ribosomal subunit.

The protein is Small ribosomal subunit protein eS32 (RpL41) of Spodoptera frugiperda (Fall armyworm).